Here is a 427-residue protein sequence, read N- to C-terminus: Indole diterpene prenyltransferase idtF (427 aa).

6 residues coordinate substrate: R97, K195, R264, K266, Y268, and Y352.

It belongs to the tryptophan dimethylallyltransferase family.

It functions in the pathway secondary metabolite biosynthesis. Functionally, indole diterpene prenyltransferase; part of the gene cluster that mediates the biosynthesis of paspalitrems, indole-diterpene (IDT) mycotoxins that are potent tremorgens in mammals. The geranylgeranyl diphosphate (GGPP) synthase idtG is proposed to catalyze the first step in IDT biosynthesis via catalysis of a series of iterative condensations of isopentenyl diphosphate (IPP) with dimethylallyl diphosphate (DMAPP), geranyl diphosphate (GPP), and farnesyl diphosphate (FPP), to form GGPP. Condensation of indole-3-glycerol phosphate with GGPP by the prenyltransferase idtC then forms 3-geranylgeranylindole (3-GGI). Epoxidation of the two terminal alkenes of the geranylgeranyl moiety by the FAD-dependent monooxygenase idtM, and cyclization by the terpene cyclase idtB then leads to the production of paspaline. The cytochrome P450 monooxygenase idtP then catalyzes oxidative elimination of the pendant methyl group at C-12 of paspaline and generates the C-10 ketone to yield 13-desoxypaxilline. The cytochrome P450 monooxygenase idtQ may catalyze the C-13 oxidation of 13-desoxypaxilline to afford paxilline. Considering that both paspalicine and paxilline were detected in C.paspali, idtQ also catalyzes the formation of paspalinine from 13-desoxypaxilline via paspalicine as an intermediate. Finally, the alpha-prenyltransferase idtF prenylates paspalinine at the C-20 or the C-21 positions to yield paspalitrems A and C, respectively. The hydroxylation of paspalitrem A at C-32 by a still unknown oxidase affords paspalitrem B. The polypeptide is Indole diterpene prenyltransferase idtF (Claviceps paspali (Rye ergot fungus)).